We begin with the raw amino-acid sequence, 433 residues long: Serendipity locus protein delta (433 aa).

Residues 1–90 (MDTCFFCGAV…TQKRLTTQLK (90 aa)) enclose the ZAD domain. Residues Cys4, Cys7, Cys61, and Cys64 each coordinate Zn(2+). Positions 141 to 162 (DTEIKREFVDEEEEEDDDDDDE) are disordered. The segment covering 149-162 (VDEEEEEDDDDDDE) has biased composition (acidic residues). The short motif at 187–193 (PTKKRVK) is the Nuclear localization signal element. 7 consecutive C2H2-type zinc fingers follow at residues 194–217 (QECT…SEEH), 223–245 (HICP…MNLH), 251–273 (KQCR…MRMH), 279–301 (YQCE…RLRH), 308–330 (IICS…TLIH), 337–359 (HYCS…MKTH), and 405–428 (GFCL…QFDH).

Homodimer (via ZAD domain) in solution. Binds DNA as a homodimer. N-terminal regions of the protein are required, in addition to the zinc fingers, for the specificity of chromatin-binding. As to expression, predominantly localized to the sub- and supraesophagal ganglia and the ventral nerve cord in the embryo, after dorsal closure.

Its subcellular location is the nucleus. In terms of biological role, transcriptional activator that controls bicoid gene expression during oogenesis. Found in transcriptionally active cells. Binds to specific sites on polytene chromosomes of third instar larvae. Binds to the consensus DNA sequence 5'-YTAGAGATGGRAA-3'. In Drosophila melanogaster (Fruit fly), this protein is Serendipity locus protein delta (Sry-delta).